Reading from the N-terminus, the 409-residue chain is Failed axon connections homolog (409 aa).

The helical transmembrane segment at Y68–I88 threads the bilayer. Positions D372–K409 are disordered.

It belongs to the FAX family.

It is found in the membrane. Its function is as follows. May play a role in axonal development. The protein is Failed axon connections homolog (Faxc) of Rattus norvegicus (Rat).